The sequence spans 132 residues: Cytochrome B5 isoform C (132 aa).

The region spanning 2–78 (ANLISFHDVA…MKKYCIGDVD (77 aa)) is the Cytochrome b5 heme-binding domain. Residues His37 and His61 each coordinate heme. Residues 110–129 (LLIYLIPLLILGVAFALRFY) form a helical membrane-spanning segment.

It belongs to the cytochrome b5 family. Interacts with CER1, BI-1, FAH1 and FAH2.

The protein localises to the endoplasmic reticulum membrane. Functionally, membrane bound hemoprotein which function as an electron carrier for several membrane bound oxygenases, including fatty acid desaturases. This Arabidopsis thaliana (Mouse-ear cress) protein is Cytochrome B5 isoform C.